A 1035-amino-acid chain; its full sequence is Kinesin-like protein KIN-4A (1035 aa).

Positions 11-370 (SVKVAVHIRP…LKYANRARNI (360 aa)) constitute a Kinesin motor domain. Position 90-97 (90-97 (GQTGSGKT)) interacts with ATP. Coiled coils occupy residues 408-436 (CAEV…HEYR), 504-707 (QNSM…RKSS), and 881-911 (KEIV…IATS). A disordered region spans residues 704 to 724 (RKSSPREHSAGTNGFGTNGQT).

Belongs to the TRAFAC class myosin-kinesin ATPase superfamily. Kinesin family. KIN-4 subfamily. Homodimer. Expressed in stems and flowers. Detected in cells undergoing secondary wall deposition including developing interfascicular fibers and xylem cells, but also in dividing cells and expanding/elongating parenchyma cells.

It localises to the cytoplasm. The protein resides in the cytoskeleton. Kinesin-like motor protein involved in the control of the oriented deposition of cellulose microfibrils. Its motor activity is directed toward the microtubule's plus end. It possesses the potential to drive long-distance transport of cargo along cortical microtubules. Regulates cell wall mechanics during cell elongation, by the regulation of primary and secondary walls deposition. Contributes to cortical microtubule-mediated trafficking of cell wall components. The sequence is that of Kinesin-like protein KIN-4A from Arabidopsis thaliana (Mouse-ear cress).